The following is a 299-amino-acid chain: UPF0282 protein TK1681 (299 aa).

Belongs to the UPF0282 family.

In Thermococcus kodakarensis (strain ATCC BAA-918 / JCM 12380 / KOD1) (Pyrococcus kodakaraensis (strain KOD1)), this protein is UPF0282 protein TK1681.